We begin with the raw amino-acid sequence, 221 residues long: Ras-related protein Rab-28 (221 aa).

Ser-2 is modified (N-acetylserine). Ser-8 is subject to Phosphoserine. GTP is bound by residues Gly-21, Gly-24, Lys-25, Thr-26, Ser-27, Gly-38, Lys-39, Tyr-41, and Thr-44. Thr-26 contributes to the Mg(2+) binding site. The segment at 35 to 49 is switch I; the sequence is ETFGKQYKQTIGLDF. The Mg(2+) site is built by Thr-44 and Asp-68. The segment at 68–85 is switch II; it reads DIGGQTIGGKMLDKYIYG. Positions 71, 129, 130, 132, 160, and 161 each coordinate GTP. Cys-218 bears the Cysteine methyl ester mark. Cys-218 carries S-farnesyl cysteine lipidation. The propeptide at 219–221 is removed in mature form; that stretch reads AVQ.

The protein belongs to the small GTPase superfamily. Rab family. In terms of assembly, interacts (prenylated form) with PDE6D; the interaction promotes RAB28 delivery to the photoreceptor outer segments. Interacts with KCNJ13; the interaction may facilitate cone outer segments phagocytosis. Interacts with RELA; the interaction contributes to RELA transport from cytoplasm to nucleus. Mg(2+) is required as a cofactor. In terms of processing, isoprenylated.

Its subcellular location is the cell membrane. It is found in the cytoplasm. It localises to the cytoskeleton. The protein resides in the cilium basal body. The protein localises to the nucleus. The enzyme catalyses GTP + H2O = GDP + phosphate + H(+). Its activity is regulated as follows. Regulated by guanine nucleotide exchange factors (GEFs) which promote the exchange of bound GDP for free GTP. Regulated by GTPase activating proteins (GAPs) which increase the GTP hydrolysis activity. Inhibited by GDP dissociation inhibitors (GDIs). Functionally, the small GTPases Rab are key regulators of intracellular membrane trafficking, from the formation of transport vesicles to their fusion with membranes. Rabs cycle between an inactive GDP-bound form and an active GTP-bound form that is able to recruit to membranes different sets of downstream effectors directly responsible for vesicle formation, movement, tethering and fusion. RAB28 is required for shedding and phagocytosis of cone cell outer segments (OS) discs in the retina. Also participates in nuclear factor kappa-B p65/RELA nuclear transport in endothelial cells. The chain is Ras-related protein Rab-28 (RAB28) from Bos taurus (Bovine).